A 750-amino-acid chain; its full sequence is Photosystem I P700 chlorophyll a apoprotein A1 (750 aa).

Helical transmembrane passes span 70–93 (VFSA…FHGA), 156–179 (LYCT…FHYH), 195–219 (LNHH…HVSL), 291–309 (IAHH…GHMY), 346–369 (WHAQ…HHMY), 385–411 (LSLF…IFMV), 433–455 (AIIS…LYIH), and 531–549 (FLVH…LILL). 2 residues coordinate [4Fe-4S] cluster: cysteine 573 and cysteine 582. Helical transmembrane passes span 589–610 (HVFL…HFSW) and 664–686 (LSAY…MFLF). Position 675 (histidine 675) interacts with chlorophyll a'. Chlorophyll a-binding residues include methionine 683 and tyrosine 691. A phylloquinone-binding site is contributed by tryptophan 692. A helical membrane pass occupies residues 724–744 (AVGVTHYLLGGIATTWAFFLA).

Belongs to the PsaA/PsaB family. In terms of assembly, the PsaA/B heterodimer binds the P700 chlorophyll special pair and subsequent electron acceptors. PSI consists of a core antenna complex that captures photons, and an electron transfer chain that converts photonic excitation into a charge separation. The eukaryotic PSI reaction center is composed of at least 11 subunits. Requires P700 is a chlorophyll a/chlorophyll a' dimer, A0 is one or more chlorophyll a, A1 is one or both phylloquinones and FX is a shared 4Fe-4S iron-sulfur center. as cofactor.

The protein localises to the plastid. Its subcellular location is the chloroplast thylakoid membrane. The catalysed reaction is reduced [plastocyanin] + hnu + oxidized [2Fe-2S]-[ferredoxin] = oxidized [plastocyanin] + reduced [2Fe-2S]-[ferredoxin]. Its function is as follows. PsaA and PsaB bind P700, the primary electron donor of photosystem I (PSI), as well as the electron acceptors A0, A1 and FX. PSI is a plastocyanin-ferredoxin oxidoreductase, converting photonic excitation into a charge separation, which transfers an electron from the donor P700 chlorophyll pair to the spectroscopically characterized acceptors A0, A1, FX, FA and FB in turn. Oxidized P700 is reduced on the lumenal side of the thylakoid membrane by plastocyanin. The polypeptide is Photosystem I P700 chlorophyll a apoprotein A1 (Cucumis sativus (Cucumber)).